A 293-amino-acid chain; its full sequence is Proline iminopeptidase (293 aa).

Positions 28 to 277 (PLVLLHGGPG…NCSHMSFVQK (250 aa)) constitute an AB hydrolase-1 domain. The active-site Nucleophile is the Ser-105. Asp-244 is an active-site residue. His-271 acts as the Proton donor in catalysis.

Belongs to the peptidase S33 family.

The protein localises to the cell envelope. The enzyme catalyses Release of N-terminal proline from a peptide.. In terms of biological role, releases the N-terminal proline from various substrates. The chain is Proline iminopeptidase from Lactobacillus acidophilus (strain ATCC 700396 / NCK56 / N2 / NCFM).